A 379-amino-acid chain; its full sequence is Succinyl-diaminopimelate desuccinylase (379 aa).

Position 68 (H68) interacts with Zn(2+). D70 is a catalytic residue. Residue D101 participates in Zn(2+) binding. Catalysis depends on E135, which acts as the Proton acceptor. Residues E136, E164, and H350 each coordinate Zn(2+).

Belongs to the peptidase M20A family. DapE subfamily. Homodimer. Zn(2+) serves as cofactor. Co(2+) is required as a cofactor.

It carries out the reaction N-succinyl-(2S,6S)-2,6-diaminopimelate + H2O = (2S,6S)-2,6-diaminopimelate + succinate. The protein operates within amino-acid biosynthesis; L-lysine biosynthesis via DAP pathway; LL-2,6-diaminopimelate from (S)-tetrahydrodipicolinate (succinylase route): step 3/3. In terms of biological role, catalyzes the hydrolysis of N-succinyl-L,L-diaminopimelic acid (SDAP), forming succinate and LL-2,6-diaminopimelate (DAP), an intermediate involved in the bacterial biosynthesis of lysine and meso-diaminopimelic acid, an essential component of bacterial cell walls. The polypeptide is Succinyl-diaminopimelate desuccinylase (Bordetella parapertussis (strain 12822 / ATCC BAA-587 / NCTC 13253)).